The primary structure comprises 698 residues: Ion-translocating oxidoreductase complex subunit C (698 aa).

4Fe-4S ferredoxin-type domains lie at 366–397 (TEMGLSEPEQSCIRCGLCVDACPAGLLPQQLY) and 407–436 (KARNHNLFDCIECGACAYVCPSNIPLVQYY). [4Fe-4S] cluster-binding residues include cysteine 377, cysteine 380, cysteine 383, cysteine 387, cysteine 416, cysteine 419, cysteine 422, and cysteine 426.

This sequence belongs to the 4Fe4S bacterial-type ferredoxin family. RnfC subfamily. In terms of assembly, the complex is composed of six subunits: RnfA, RnfB, RnfC, RnfD, RnfE and RnfG. [4Fe-4S] cluster is required as a cofactor.

The protein resides in the cell inner membrane. Functionally, part of a membrane-bound complex that couples electron transfer with translocation of ions across the membrane. This is Ion-translocating oxidoreductase complex subunit C from Yersinia pseudotuberculosis serotype O:3 (strain YPIII).